We begin with the raw amino-acid sequence, 321 residues long: Probable DNA polymerase III subunit delta (321 aa).

It belongs to the DNA polymerase HolA subunit family. Component of the DNA clamp loading complex consisting of tau(3):delta(1):delta'(1). The DNA polymerase III holoenzyme complex contains at least 10 different subunits organized into 3 functionally essential subassemblies: the Pol III core, the beta sliding clamp processivity factor and the clamp-loading complex. The Pol III core (subunits alpha, epsilon and theta) contains the polymerase and the 3'-5' exonuclease proofreading activities. The polymerase is tethered to the template via the dimeric beta sliding clamp processivity factor. The DNA clamp-loading complex assembles the beta sliding clamp onto the primed template and plays a central role in the organization and communication at the replication fork.

It carries out the reaction DNA(n) + a 2'-deoxyribonucleoside 5'-triphosphate = DNA(n+1) + diphosphate. Part of the beta sliding clamp loading complex, which hydrolyzes ATP to load the beta clamp onto primed DNA to form the DNA replication pre-initiation complex. DNA polymerase III is a complex, multichain enzyme responsible for most of the replicative synthesis in bacteria. This DNA polymerase also exhibits 3'-5' exonuclease activity. The delta subunit is the wrench that will open the beta subunit dimer. The DNA clamp loading complex (tau(3),delta,delta') is thought to load beta dimers onto DNA by binding ATP which alters the complex's conformation so it can bind beta sliding clamp dimers and open them at one interface. Primed DNA is recognized, ATP is hydrolyzed releasing the clamp loading complex and closing the beta sliding clamp ring around the primed DNA. This Rickettsia prowazekii (strain Madrid E) protein is Probable DNA polymerase III subunit delta.